Reading from the N-terminus, the 407-residue chain is Eukaryotic initiation factor 4A-II (407 aa).

A disordered region spans residues 1-22; the sequence is MSGGSADYNREHGGPEGMDPDG. A Q motif motif is present at residues 33–61; sequence DNFDDMNLKESLLRGIYAYGFEKPSAIQQ. The 172-residue stretch at 64-235 folds into the Helicase ATP-binding domain; that stretch reads IIPCIKGYDV…KKFMRDPIRI (172 aa). Residue 77–84 coordinates ATP; the sequence is AQSGTGKT. The residue at position 159 (Thr-159) is a Phosphothreonine. The short motif at 183–186 is the DEAD box element; sequence DEAD. The region spanning 246–407 is the Helicase C-terminal domain; that stretch reads GIKQFYINVE…EMPMNVADLI (162 aa).

It belongs to the DEAD box helicase family. eIF4A subfamily. As to quaternary structure, eIF4F is a multi-subunit complex, the composition of which varies with external and internal environmental conditions. It is composed of at least EIF4A, EIF4E and EIF4G1/EIFFG3. Interacts with EIF4E. May interact with NOM1.

It carries out the reaction ATP + H2O = ADP + phosphate + H(+). ATP-dependent RNA helicase which is a subunit of the eIF4F complex involved in cap recognition and is required for mRNA binding to ribosome. In the current model of translation initiation, eIF4A unwinds RNA secondary structures in the 5'-UTR of mRNAs which is necessary to allow efficient binding of the small ribosomal subunit, and subsequent scanning for the initiator codon. In Bos taurus (Bovine), this protein is Eukaryotic initiation factor 4A-II (EIF4A2).